Here is a 420-residue protein sequence, read N- to C-terminus: 3-oxoacyl-[acyl-carrier-protein] synthase 2 (420 aa).

A Ketosynthase family 3 (KS3) domain is found at 13–419 (FPNVVVTGIA…GHNVAIAFGC (407 aa)). Residues C173, H314, and H349 each act as for beta-ketoacyl synthase activity in the active site.

Belongs to the thiolase-like superfamily. Beta-ketoacyl-ACP synthases family.

Its subcellular location is the cytoplasm. The catalysed reaction is an ultra-long-chain di-unsaturated fatty acyl-[ACP] + malonyl-[ACP] + H(+) = a 3-oxo-ultra-long-chain di-unsaturated fatty acyl-[ACP] + holo-[ACP] + CO2. It participates in lipid metabolism; mycolic acid biosynthesis. Functionally, part of the mycobacterial fatty acid elongation system FAS-II, which is involved in mycolic acid biosynthesis. Catalyzes the elongation of long chain acyl-ACP substrates by the addition of two carbons from malonyl-ACP to an acyl acceptor. Involved in extension of the mycolate chains to full lengths and produces longer chain multiunsaturated hydrocarbons averaging 54 carbons in length. The sequence is that of 3-oxoacyl-[acyl-carrier-protein] synthase 2 (kasB) from Mycobacterium leprae (strain TN).